We begin with the raw amino-acid sequence, 392 residues long: Speckle-type POZ protein-like (392 aa).

The MATH domain occupies 31–161 (KFSYMWTINN…DDKLTLFCEV (131 aa)). Positions 200-267 (TDCSFFVRGQ…IYTGRAPNLD (68 aa)) constitute a BTB domain.

The protein belongs to the Tdpoz family. In terms of assembly, homodimer. Heterodimer with SPOP. Component of cullin-RING-based BCR (BTB-CUL3-RBX1) E3 ubiquitin-protein ligase complexes containing homodimeric SPOPL or the heterodimer formed by SPOP and SPOPL. Interacts with CUL3 and MACROH2A1.

The protein localises to the nucleus. It participates in protein modification; protein ubiquitination. In terms of biological role, component of a cullin-RING-based BCR (BTB-CUL3-RBX1) E3 ubiquitin-protein ligase complex that mediates the ubiquitination and subsequent proteasomal degradation of target proteins, but with relatively low efficiency. Cullin-RING-based BCR (BTB-CUL3-RBX1) E3 ubiquitin-protein ligase complexes containing homodimeric SPOPL or the heterodimer formed by SPOP and SPOPL are less efficient than ubiquitin ligase complexes containing only SPOP. May function to down-regulate the activity of cullin-RING-based BCR (BTB-CUL3-RBX1) E3 ubiquitin-protein ligase complexes that contain SPOP. The sequence is that of Speckle-type POZ protein-like (SPOPL) from Homo sapiens (Human).